We begin with the raw amino-acid sequence, 93 residues long: Large ribosomal subunit protein bL31 (93 aa).

The interval 68 to 93 is disordered; the sequence is GSADAAADEKKTDAKNNNKDNTSKED. Residues 74-93 are compositionally biased toward basic and acidic residues; the sequence is ADEKKTDAKNNNKDNTSKED.

This sequence belongs to the bacterial ribosomal protein bL31 family. Type A subfamily. In terms of assembly, part of the 50S ribosomal subunit.

In terms of biological role, binds the 23S rRNA. The protein is Large ribosomal subunit protein bL31 of Prochlorococcus marinus (strain MIT 9303).